Reading from the N-terminus, the 257-residue chain is Hydroxyethylthiazole kinase (257 aa).

Residue Met-42 participates in substrate binding. ATP is bound by residues Arg-117 and Thr-163. Ala-190 is a substrate binding site.

It belongs to the Thz kinase family. It depends on Mg(2+) as a cofactor.

It carries out the reaction 5-(2-hydroxyethyl)-4-methylthiazole + ATP = 4-methyl-5-(2-phosphooxyethyl)-thiazole + ADP + H(+). It participates in cofactor biosynthesis; thiamine diphosphate biosynthesis; 4-methyl-5-(2-phosphoethyl)-thiazole from 5-(2-hydroxyethyl)-4-methylthiazole: step 1/1. In terms of biological role, catalyzes the phosphorylation of the hydroxyl group of 4-methyl-5-beta-hydroxyethylthiazole (THZ). In Roseobacter denitrificans (strain ATCC 33942 / OCh 114) (Erythrobacter sp. (strain OCh 114)), this protein is Hydroxyethylthiazole kinase.